Reading from the N-terminus, the 150-residue chain is Large ribosomal subunit protein bL9 (150 aa).

This sequence belongs to the bacterial ribosomal protein bL9 family.

Its function is as follows. Binds to the 23S rRNA. In Neisseria meningitidis serogroup C / serotype 2a (strain ATCC 700532 / DSM 15464 / FAM18), this protein is Large ribosomal subunit protein bL9.